The following is a 205-amino-acid chain: Peptidyl-tRNA hydrolase (205 aa).

TRNA is bound at residue Tyr-18. Catalysis depends on His-23, which acts as the Proton acceptor. Positions 69, 71, and 117 each coordinate tRNA.

Belongs to the PTH family. In terms of assembly, monomer.

It is found in the cytoplasm. The catalysed reaction is an N-acyl-L-alpha-aminoacyl-tRNA + H2O = an N-acyl-L-amino acid + a tRNA + H(+). Hydrolyzes ribosome-free peptidyl-tRNAs (with 1 or more amino acids incorporated), which drop off the ribosome during protein synthesis, or as a result of ribosome stalling. Its function is as follows. Catalyzes the release of premature peptidyl moieties from peptidyl-tRNA molecules trapped in stalled 50S ribosomal subunits, and thus maintains levels of free tRNAs and 50S ribosomes. The chain is Peptidyl-tRNA hydrolase from Thermosynechococcus vestitus (strain NIES-2133 / IAM M-273 / BP-1).